A 108-amino-acid chain; its full sequence is Synaptobrevin-1 (108 aa).

The tract at residues 1–25 (MDAQGDAGAQGGSQGPRPSNKRLQQ) is disordered. At 1 to 85 (MDAQGDAGAQ…KRKYWWKNIK (85 aa)) the chain is on the cytoplasmic side. The v-SNARE coiled-coil homology domain maps to 22–82 (RLQQTQAQVD…ATLKRKYWWK (61 aa)). The chain crosses the membrane as a helical; Anchor for type IV membrane protein span at residues 86 to 106 (MMIIMCAIVVILIIIIVLWAG). Residues 107–108 (GK) are Extracellular-facing.

This sequence belongs to the synaptobrevin family. As to quaternary structure, part of the SNARE core complex containing CBG09569/SNAP25, snb-1/VAMP2 and CBG03570/STX1A. This complex binds to cpx-1/CPLX1.

The protein localises to the cytoplasmic vesicle. Its subcellular location is the secretory vesicle. The protein resides in the synaptic vesicle membrane. It is found in the cell membrane. It localises to the synapse. The protein localises to the synaptosome. Functionally, involved in the targeting and/or fusion of transport vesicles to their target membrane. Acts in neuronal exocytosis of synaptic transmission. Likely to have a role in cholinergic transmisson. Required for viability, coordinated movement and M3 pharynx motor neuron function. This is Synaptobrevin-1 from Caenorhabditis briggsae.